Here is a 224-residue protein sequence, read N- to C-terminus: Thiamine-triphosphatase (224 aa).

Residue Ala2 is modified to N-acetylalanine. One can recognise a CYTH domain in the interval 5 to 201 (LIEVERKFAP…AKLMVYLQRF (197 aa)). Positions 7 and 9 each coordinate Mg(2+). Lys11, Arg55, Arg57, Lys65, and Arg125 together coordinate substrate. Mg(2+) is bound by residues Asp145, Glu157, and Glu159. Position 157 (Glu157) interacts with substrate. Substrate is bound at residue Lys193.

This sequence belongs to the ThTPase family. In terms of assembly, monomer. Mg(2+) serves as cofactor.

It is found in the cytoplasm. It catalyses the reaction thiamine triphosphate + H2O = thiamine diphosphate + phosphate + H(+). Its function is as follows. Hydrolase highly specific for thiamine triphosphate (ThTP). This is Thiamine-triphosphatase (Thtpa) from Mus musculus (Mouse).